The primary structure comprises 436 residues: Serine/threonine-protein kinase STK11 (436 aa).

Residue Ser-31 is modified to Phosphoserine. 2 positions are modified to N6-acetyllysine: Lys-44 and Lys-48. The interval 45–90 is sufficient for interaction with SIRT1; that stretch reads LIGKYLMGDLLGEGSYGKVKEVLDSETLCRRAVKILKKKKLRRIPN. The Protein kinase domain occupies 49–309; that stretch reads YLMGDLLGEG…IRQIRQHSWF (261 aa). ATP contacts are provided by residues 55 to 63 and Lys-78; that span reads LGEGSYGKV. N6-acetyllysine occurs at positions 96 and 97. The active-site Proton acceptor is Asp-176. Phosphothreonine; by autocatalysis is present on Thr-189. Lys-296 and Lys-311 each carry N6-acetyllysine. Ser-325 is subject to Phosphoserine. Phosphothreonine; by autocatalysis is present on Thr-336. Residue Thr-366 is modified to Phosphothreonine; by ATM and autocatalysis. A disordered region spans residues 398–421; sequence TEPQLSSKVKPEGRPGTANPARKV. Ser-403 is subject to Phosphoserine. Lys-420 is modified (N6-acetyllysine). Residue Cys-422 is the site of S-palmitoyl cysteine attachment. Lys-426 bears the N6-acetyllysine mark. At Ser-431 the chain carries Phosphoserine; by autocatalysis, PKA, PKC/PRKCZ and RPS6KA1. Cys-433 is modified (cysteine methyl ester). A lipid anchor (S-farnesyl cysteine) is attached at Cys-433. Lys-434 is modified (N6-acetyllysine). A propeptide spans 434 to 436 (removed in mature form); sequence KQQ.

Belongs to the protein kinase superfamily. CAMK Ser/Thr protein kinase family. LKB1 subfamily. Catalytic component of a trimeric complex composed of STK11/LKB1, STRAD (STRADA or STRADB) and CAB39/MO25 (CAB39/MO25alpha or CAB39L/MO25beta): the complex tethers STK11/LKB1 in the cytoplasm and stimulates its catalytic activity. Found in a ternary complex composed of SMAD4, STK11/LKB1 and STK11IP. Interacts with p53/TP53, SMAD4, STK11IP and WDR6. Interacts with NR4A1. Interacts with NISCH; this interaction may increase STK11 activity. Interacts with PTEN, leading to PTEN phosphorylation. Interacts with SIRT1; the interaction deacetylates STK11. Interacts with CDKN1A. Requires Mg(2+) as cofactor. It depends on Mn(2+) as a cofactor. Phosphorylated by ATM at Thr-366 following ionizing radiation (IR). Phosphorylation at Ser-431 by RPS6KA1 and/or some PKA is required to inhibit cell growth. Phosphorylation at Ser-431 is also required during neuronal polarization to mediate phosphorylation of BRSK1 and BRSK2. Phosphorylation by PKC/PRKCZ at Ser-399 in isoform 2 promotes metformin (or peroxynitrite)-induced nuclear export of STK11 and activation of AMPK. UV radiation-induced phosphorylation at Thr-366 mediates CDKN1A degradation. Post-translationally, acetylated. Deacetylation at Lys-48 enhances cytoplasmic localization and kinase activity in vitro. As to expression, widely expressed. In terms of tissue distribution, predominantly expressed in testis (at protein level). Expressed in adult brain and liver and absent from tissues derived from postnatal day 7.

It localises to the nucleus. Its subcellular location is the cytoplasm. It is found in the membrane. The protein resides in the mitochondrion. It catalyses the reaction L-seryl-[protein] + ATP = O-phospho-L-seryl-[protein] + ADP + H(+). The catalysed reaction is L-threonyl-[protein] + ATP = O-phospho-L-threonyl-[protein] + ADP + H(+). Activated by forming a complex with STRAD (STRADA or STRADB) and CAB39/MO25 (CAB39/MO25alpha or CAB39L/MO25beta): STRADA (or STRADB)-binding promotes a conformational change of STK11/LKB1 in an active conformation, which is stabilized by CAB39/MO25alpha (or CAB39L/MO25beta) interacting with the STK11/LKB1 activation loop. Sequestration in the nucleus by NR4A1 prevents it from phosphorylating and activating cytoplasmic AMPK. Its function is as follows. Tumor suppressor serine/threonine-protein kinase that controls the activity of AMP-activated protein kinase (AMPK) family members, thereby playing a role in various processes such as cell metabolism, cell polarity, apoptosis and DNA damage response. Acts by phosphorylating the T-loop of AMPK family proteins, thus promoting their activity: phosphorylates PRKAA1, PRKAA2, BRSK1, BRSK2, MARK1, MARK2, MARK3, MARK4, NUAK1, NUAK2, SIK1, SIK2, SIK3 and SNRK but not MELK. Also phosphorylates non-AMPK family proteins such as STRADA, PTEN and possibly p53/TP53. Acts as a key upstream regulator of AMPK by mediating phosphorylation and activation of AMPK catalytic subunits PRKAA1 and PRKAA2 and thereby regulates processes including: inhibition of signaling pathways that promote cell growth and proliferation when energy levels are low, glucose homeostasis in liver, activation of autophagy when cells undergo nutrient deprivation, and B-cell differentiation in the germinal center in response to DNA damage. Also acts as a regulator of cellular polarity by remodeling the actin cytoskeleton. Required for cortical neuron polarization by mediating phosphorylation and activation of BRSK1 and BRSK2, leading to axon initiation and specification. Involved in DNA damage response: interacts with p53/TP53 and recruited to the CDKN1A/WAF1 promoter to participate in transcription activation. Able to phosphorylate p53/TP53; the relevance of such result in vivo is however unclear and phosphorylation may be indirect and mediated by downstream STK11/LKB1 kinase NUAK1. Also acts as a mediator of p53/TP53-dependent apoptosis via interaction with p53/TP53: translocates to the mitochondrion during apoptosis and regulates p53/TP53-dependent apoptosis pathways. Regulates UV radiation-induced DNA damage response mediated by CDKN1A. In association with NUAK1, phosphorylates CDKN1A in response to UV radiation and contributes to its degradation which is necessary for optimal DNA repair. Has a role in spermiogenesis. This chain is Serine/threonine-protein kinase STK11, found in Mus musculus (Mouse).